Here is a 336-residue protein sequence, read N- to C-terminus: DNA-directed RNA polymerase subunit alpha (336 aa).

The interval Met-1–Glu-233 is alpha N-terminal domain (alpha-NTD). The tract at residues Ile-247 to Ser-336 is alpha C-terminal domain (alpha-CTD).

This sequence belongs to the RNA polymerase alpha chain family. Homodimer. The RNAP catalytic core consists of 2 alpha, 1 beta, 1 beta' and 1 omega subunit. When a sigma factor is associated with the core the holoenzyme is formed, which can initiate transcription.

It catalyses the reaction RNA(n) + a ribonucleoside 5'-triphosphate = RNA(n+1) + diphosphate. Functionally, DNA-dependent RNA polymerase catalyzes the transcription of DNA into RNA using the four ribonucleoside triphosphates as substrates. The chain is DNA-directed RNA polymerase subunit alpha from Nitrosomonas europaea (strain ATCC 19718 / CIP 103999 / KCTC 2705 / NBRC 14298).